A 339-amino-acid chain; its full sequence is 2-oxoisovalerate dehydrogenase subunit beta (339 aa).

As to quaternary structure, heterodimer of an alpha and a beta chain. Requires thiamine diphosphate as cofactor.

The enzyme catalyses N(6)-[(R)-lipoyl]-L-lysyl-[protein] + 3-methyl-2-oxobutanoate + H(+) = N(6)-[(R)-S(8)-2-methylpropanoyldihydrolipoyl]-L-lysyl-[protein] + CO2. In terms of biological role, the branched-chain alpha-keto dehydrogenase complex catalyzes the overall conversion of alpha-keto acids to acyl-CoA and CO(2). It contains multiple copies of three enzymatic components: branched-chain alpha-keto acid decarboxylase (E1), lipoamide acyltransferase (E2) and lipoamide dehydrogenase (E3). This chain is 2-oxoisovalerate dehydrogenase subunit beta (bkdA2), found in Pseudomonas putida (Arthrobacter siderocapsulatus).